Here is a 364-residue protein sequence, read N- to C-terminus: Mannonate dehydratase (364 aa).

This sequence belongs to the mannonate dehydratase family. Requires Fe(2+) as cofactor. The cofactor is Mn(2+).

The catalysed reaction is D-mannonate = 2-dehydro-3-deoxy-D-gluconate + H2O. It functions in the pathway carbohydrate metabolism; pentose and glucuronate interconversion. In terms of biological role, catalyzes the dehydration of D-mannonate. This is Mannonate dehydratase from Streptococcus equi subsp. zooepidemicus (strain MGCS10565).